The sequence spans 282 residues: Large ribosomal subunit protein uL2 (282 aa).

Disordered stretches follow at residues 31-54 (KRLTKPVRKSGGRNAHGKVTTRHI) and 223-282 (LAMN…NTQR). Composition is skewed to basic residues over residues 34–54 (TKPVRKSGGRNAHGKVTTRHI) and 270–282 (VTRRRPGVRNTQR).

This sequence belongs to the universal ribosomal protein uL2 family. As to quaternary structure, part of the 50S ribosomal subunit. Forms a bridge to the 30S subunit in the 70S ribosome.

One of the primary rRNA binding proteins. Required for association of the 30S and 50S subunits to form the 70S ribosome, for tRNA binding and peptide bond formation. It has been suggested to have peptidyltransferase activity; this is somewhat controversial. Makes several contacts with the 16S rRNA in the 70S ribosome. This is Large ribosomal subunit protein uL2 from Anaeromyxobacter dehalogenans (strain 2CP-1 / ATCC BAA-258).